The primary structure comprises 325 residues: Holliday junction branch migration complex subunit RuvB (325 aa).

The interval 1–172 (MENNELLDIT…FGVVFRLEFY (172 aa)) is large ATPase domain (RuvB-L). Residues Leu-11, Arg-12, Gly-53, Lys-56, Thr-57, Thr-58, 119–121 (EDF), Arg-162, Tyr-172, and Arg-209 each bind ATP. Residue Thr-57 participates in Mg(2+) binding. Residues 173-243 (NSEELKEIVK…IAQEALIAMD (71 aa)) are small ATPAse domain (RuvB-S). Residues 246 to 325 (DYGLDDMDRK…LKRKIPERLF (80 aa)) form a head domain (RuvB-H) region. Residues Arg-301 and Arg-306 each coordinate DNA.

It belongs to the RuvB family. As to quaternary structure, homohexamer. Forms an RuvA(8)-RuvB(12)-Holliday junction (HJ) complex. HJ DNA is sandwiched between 2 RuvA tetramers; dsDNA enters through RuvA and exits via RuvB. An RuvB hexamer assembles on each DNA strand where it exits the tetramer. Each RuvB hexamer is contacted by two RuvA subunits (via domain III) on 2 adjacent RuvB subunits; this complex drives branch migration. In the full resolvosome a probable DNA-RuvA(4)-RuvB(12)-RuvC(2) complex forms which resolves the HJ.

It is found in the cytoplasm. The catalysed reaction is ATP + H2O = ADP + phosphate + H(+). In terms of biological role, the RuvA-RuvB-RuvC complex processes Holliday junction (HJ) DNA during genetic recombination and DNA repair, while the RuvA-RuvB complex plays an important role in the rescue of blocked DNA replication forks via replication fork reversal (RFR). RuvA specifically binds to HJ cruciform DNA, conferring on it an open structure. The RuvB hexamer acts as an ATP-dependent pump, pulling dsDNA into and through the RuvAB complex. RuvB forms 2 homohexamers on either side of HJ DNA bound by 1 or 2 RuvA tetramers; 4 subunits per hexamer contact DNA at a time. Coordinated motions by a converter formed by DNA-disengaged RuvB subunits stimulates ATP hydrolysis and nucleotide exchange. Immobilization of the converter enables RuvB to convert the ATP-contained energy into a lever motion, pulling 2 nucleotides of DNA out of the RuvA tetramer per ATP hydrolyzed, thus driving DNA branch migration. The RuvB motors rotate together with the DNA substrate, which together with the progressing nucleotide cycle form the mechanistic basis for DNA recombination by continuous HJ branch migration. Branch migration allows RuvC to scan DNA until it finds its consensus sequence, where it cleaves and resolves cruciform DNA. This Thermodesulfovibrio yellowstonii (strain ATCC 51303 / DSM 11347 / YP87) protein is Holliday junction branch migration complex subunit RuvB.